Reading from the N-terminus, the 92-residue chain is Small ribosomal subunit protein uS19 (92 aa).

This sequence belongs to the universal ribosomal protein uS19 family.

Its function is as follows. Protein S19 forms a complex with S13 that binds strongly to the 16S ribosomal RNA. This chain is Small ribosomal subunit protein uS19 (rpsS), found in Halalkalibacterium halodurans (strain ATCC BAA-125 / DSM 18197 / FERM 7344 / JCM 9153 / C-125) (Bacillus halodurans).